Consider the following 262-residue polypeptide: Carbonic anhydrase 13 (262 aa).

One can recognise an Alpha-carbonic anhydrase domain in the interval 4 to 261 (LSWGYREHNG…LKGRKVRASF (258 aa)). Histidine 65 functions as the Proton donor/acceptor in the catalytic mechanism. Positions 95, 97, and 120 each coordinate Zn(2+). 200-201 (TV) is a substrate binding site.

The protein belongs to the alpha-carbonic anhydrase family. Zn(2+) serves as cofactor. Expressed in thymus, small intestine, spleen, prostate, ovary, colon and testis.

The catalysed reaction is hydrogencarbonate + H(+) = CO2 + H2O. Inhibited by acetazolamide. Reversible hydration of carbon dioxide. This chain is Carbonic anhydrase 13 (CA13), found in Homo sapiens (Human).